The sequence spans 258 residues: Malonyl-[acyl-carrier protein] O-methyltransferase (258 aa).

This sequence belongs to the methyltransferase superfamily.

The catalysed reaction is malonyl-[ACP] + S-adenosyl-L-methionine = malonyl-[ACP] methyl ester + S-adenosyl-L-homocysteine. Its pathway is cofactor biosynthesis; biotin biosynthesis. In terms of biological role, converts the free carboxyl group of a malonyl-thioester to its methyl ester by transfer of a methyl group from S-adenosyl-L-methionine (SAM). It allows to synthesize pimeloyl-ACP via the fatty acid synthetic pathway. In Haemophilus ducreyi (strain 35000HP / ATCC 700724), this protein is Malonyl-[acyl-carrier protein] O-methyltransferase.